The chain runs to 251 residues: Zinc import ATP-binding protein ZnuC (251 aa).

Residues 5–220 (VSLENVSVSF…PEFISMFGPR (216 aa)) enclose the ABC transporter domain. 37–44 (GPNGAGKS) is a binding site for ATP.

Belongs to the ABC transporter superfamily. Zinc importer (TC 3.A.1.15.5) family. In terms of assembly, the complex is composed of two ATP-binding proteins (ZnuC), two transmembrane proteins (ZnuB) and a solute-binding protein (ZnuA).

It is found in the cell inner membrane. It catalyses the reaction Zn(2+)(out) + ATP(in) + H2O(in) = Zn(2+)(in) + ADP(in) + phosphate(in) + H(+)(in). Part of the ABC transporter complex ZnuABC involved in zinc import. Responsible for energy coupling to the transport system. In Salmonella choleraesuis (strain SC-B67), this protein is Zinc import ATP-binding protein ZnuC.